The chain runs to 404 residues: Sodium/glutamate symporter (404 aa).

A run of 11 helical transmembrane segments spans residues 5–25 (FSTYETLALASLVLLLGYFLV), 33–53 (TFNIPEPVVGGFIVAIGLLIW), 69–89 (TTMMLVFFTSIGLSANFSRLI), 95–115 (LVVFLFIAALLIFGQNVIGIA), 161–181 (IAIACATFGLVFGGIIGGPVA), 219–239 (SLIETIAMISVCLLIGQYLDV), 245–265 (ALQLPTFVWCLFTGVIVRNIL), 277–297 (AIDVLGSVGLSIFLAIALMSL), 307–327 (IDVLIVLAIQVAFMAAFAIFI), 338–358 (AVVLSAGHCGFGLGATPTAIA), and 373–393 (AFLIVPMVGAFFIDLINAALL).

This sequence belongs to the glutamate:Na(+) symporter (ESS) (TC 2.A.27) family.

It localises to the cell inner membrane. Its function is as follows. Catalyzes the sodium-dependent transport of glutamate. The polypeptide is Sodium/glutamate symporter (Haemophilus influenzae (strain ATCC 51907 / DSM 11121 / KW20 / Rd)).